The following is a 344-amino-acid chain: L-rhamnose-proton symporter (344 aa).

10 helical membrane passes run 4–24 (AITM…CFYA), 38–58 (WSVG…ALLL), 68–88 (FSLS…IGNI), 101–121 (MGIG…TPII), 137–157 (TLLG…AGQL), 175–195 (LVLA…MNAA), 214–234 (LPSY…FCFI), 259–279 (VLLS…YAWG), 290–310 (ISWM…GLVL), and 323–343 (VLSL…IGMA).

Belongs to the L-rhamnose transporter (TC 2.A.7.6) family.

The protein resides in the cell inner membrane. It catalyses the reaction L-rhamnopyranose(in) + H(+)(in) = L-rhamnopyranose(out) + H(+)(out). Functionally, uptake of L-rhamnose across the cytoplasmic membrane with the concomitant transport of protons into the cell (symport system). This Shigella boydii serotype 18 (strain CDC 3083-94 / BS512) protein is L-rhamnose-proton symporter.